We begin with the raw amino-acid sequence, 466 residues long: Methylenetetrahydrofolate--tRNA-(uracil-5-)-methyltransferase TrmFO (466 aa).

16-21 is an FAD binding site; the sequence is GGGMAG.

It belongs to the MnmG family. TrmFO subfamily. FAD is required as a cofactor.

It localises to the cytoplasm. It catalyses the reaction uridine(54) in tRNA + (6R)-5,10-methylene-5,6,7,8-tetrahydrofolate + NADH + H(+) = 5-methyluridine(54) in tRNA + (6S)-5,6,7,8-tetrahydrofolate + NAD(+). The enzyme catalyses uridine(54) in tRNA + (6R)-5,10-methylene-5,6,7,8-tetrahydrofolate + NADPH + H(+) = 5-methyluridine(54) in tRNA + (6S)-5,6,7,8-tetrahydrofolate + NADP(+). Catalyzes the folate-dependent formation of 5-methyl-uridine at position 54 (M-5-U54) in all tRNAs. This is Methylenetetrahydrofolate--tRNA-(uracil-5-)-methyltransferase TrmFO from Maricaulis maris (strain MCS10) (Caulobacter maris).